Reading from the N-terminus, the 319-residue chain is MNATTSAAAYGPLAGADLEAELAQARVTDDAVRDAAIVDRDGGASVVPLARRRPGSPAPGDAVTLSGVSKRFGTRTVLDNVELGIARGSFVAIVGRSGCGKSTLLRLVAGLETPSSGALATRGEGGGTLDTRIMYQDARLLPWKTVLQNVMLGLGRGARDRARAVLDEVGLLERANDWPAQLSGGQRQRVALARALVHRPQLLLLDEPLGALDALTRIEMHALIERLWREHRFTALLVTHDVQEAVALGDRILLIEQGRVALDQQVPLDRPRARASAAFAALEDRVLQRVLAGGPGGADQEAAREVDHVRPVGQIRWAV.

The ABC transporter domain occupies 63 to 282 (VTLSGVSKRF…ARASAAFAAL (220 aa)). Residue 95–102 (GRSGCGKS) coordinates ATP.

It belongs to the ABC transporter superfamily. Aliphatic sulfonates importer (TC 3.A.1.17.2) family. As to quaternary structure, the complex is composed of two ATP-binding proteins (SsuB), two transmembrane proteins (SsuC) and a solute-binding protein (SsuA).

It is found in the cell inner membrane. The catalysed reaction is ATP + H2O + aliphatic sulfonate-[sulfonate-binding protein]Side 1 = ADP + phosphate + aliphatic sulfonateSide 2 + [sulfonate-binding protein]Side 1.. Functionally, part of the ABC transporter complex SsuABC involved in aliphatic sulfonates import. Responsible for energy coupling to the transport system. The sequence is that of Aliphatic sulfonates import ATP-binding protein SsuB from Burkholderia ambifaria (strain ATCC BAA-244 / DSM 16087 / CCUG 44356 / LMG 19182 / AMMD) (Burkholderia cepacia (strain AMMD)).